The primary structure comprises 212 residues: NADH dehydrogenase [ubiquinone] iron-sulfur protein 8, mitochondrial (212 aa).

Residues 1–34 (MYRLSSSMLPRALAQAMRTGHLNGQSLHSSAVAA) constitute a mitochondrion transit peptide. 2 4Fe-4S ferredoxin-type domains span residues 104-133 (RRYP…IEAE) and 143-172 (TRYD…EGPN). 8 residues coordinate [4Fe-4S] cluster: Cys113, Cys116, Cys119, Cys123, Cys152, Cys155, Cys158, and Cys162.

Belongs to the complex I 23 kDa subunit family. In terms of assembly, complex I is composed of 45 different subunits. This is a component of the iron-sulfur (IP) fragment of the enzyme. Interacts with RAB5IF. Requires [4Fe-4S] cluster as cofactor.

It localises to the mitochondrion inner membrane. It carries out the reaction a ubiquinone + NADH + 5 H(+)(in) = a ubiquinol + NAD(+) + 4 H(+)(out). Functionally, core subunit of the mitochondrial membrane respiratory chain NADH dehydrogenase (Complex I) which catalyzes electron transfer from NADH through the respiratory chain, using ubiquinone as an electron acceptor. Essential for the catalytic activity and assembly of complex I. This chain is NADH dehydrogenase [ubiquinone] iron-sulfur protein 8, mitochondrial (Ndufs8), found in Mus musculus (Mouse).